A 190-amino-acid chain; its full sequence is MKRLISCLTIICALNASAAAETTSNPCSRWISFLKPVCQRIHQTWAEGHDDMYFSGYAWHNRYVYSNEKIKSYNETAWGGGLGKSLFDEKGNWHGLYAIAFLDSHRHFEPAVGYAYLKTASVNKDLKAGLGYSVLVTSRVDYDNVPIPGALPWAALFYKRITIAATYIPGSSREGHENGNVLYMLGKISL.

Positions 1 to 18 (MKRLISCLTIICALNASA) are cleaved as a signal peptide. Active-site residues include His-60, Asp-103, and Ser-104.

The protein belongs to the lipid A palmitoyltransferase family. As to quaternary structure, homodimer.

It is found in the cell outer membrane. The catalysed reaction is a lipid A + a 1,2-diacyl-sn-glycero-3-phosphocholine = a hepta-acyl lipid A + a 2-acyl-sn-glycero-3-phosphocholine. The enzyme catalyses a lipid IVA + a 1,2-diacyl-sn-glycero-3-phosphocholine = a lipid IVB + a 2-acyl-sn-glycero-3-phosphocholine. It carries out the reaction a lipid IIA + a 1,2-diacyl-sn-glycero-3-phosphocholine = a lipid IIB + a 2-acyl-sn-glycero-3-phosphocholine. Its function is as follows. Transfers a fatty acid residue from the sn-1 position of a phospholipid to the N-linked hydroxyfatty acid chain on the proximal unit of lipid A or its precursors. This is Lipid A acyltransferase PagP from Legionella pneumophila (strain Corby).